Here is a 1193-residue protein sequence, read N- to C-terminus: DNA polymerase (1193 aa).

The tract at residues 1-88 (MALVQTHGSR…PAKKKRGTVV (88 aa)) is disordered. Positions 48–68 (PATTASGSRAAPTARRASSPP) are enriched in low complexity.

It belongs to the DNA polymerase type-B family. In terms of assembly, heterodimer with the terminal protein; this heterodimer binds to bp 9 to 18 of the genome. Forms a complex with viral pTP, DBP and hosts NFIA and POU2F1/OCT1 for initiation of replication.

The protein localises to the host nucleus. It carries out the reaction DNA(n) + a 2'-deoxyribonucleoside 5'-triphosphate = DNA(n+1) + diphosphate. Its function is as follows. Eukaryotic-type DNA polymerase involved in viral genomic replication. DNA synthesis is protein primed, and acts in a strand displacement replication. Assembles in complex with viral pTP, DBP, host NFIA and host POU2F1/OCT1 on viral origin of replication. The polymerase covalently transfers dCMP onto pTP, thereby initiating complementary strand synthesis. The polypeptide is DNA polymerase (Homo sapiens (Human)).